The following is a 216-amino-acid chain: Ribosomal RNA large subunit methyltransferase E (216 aa).

Residues Gly71, Trp73, Asp88, Asp104, and Asp126 each coordinate S-adenosyl-L-methionine. Catalysis depends on Lys166, which acts as the Proton acceptor.

This sequence belongs to the class I-like SAM-binding methyltransferase superfamily. RNA methyltransferase RlmE family.

The protein localises to the cytoplasm. It catalyses the reaction uridine(2552) in 23S rRNA + S-adenosyl-L-methionine = 2'-O-methyluridine(2552) in 23S rRNA + S-adenosyl-L-homocysteine + H(+). Specifically methylates the uridine in position 2552 of 23S rRNA at the 2'-O position of the ribose in the fully assembled 50S ribosomal subunit. In Wolbachia sp. subsp. Brugia malayi (strain TRS), this protein is Ribosomal RNA large subunit methyltransferase E.